A 556-amino-acid polypeptide reads, in one-letter code: 5-aminolevulinate synthase, mitochondrial (556 aa).

A mitochondrion-targeting transit peptide spans 1-46; the sequence is MDSLARQSAKICPFVSRVTSSMQQVQVLHKTNMSAMAQQCPVMRRA. Substrate contacts are provided by Arg105, Ser218, and Lys237. Residues Ser270, His298, and Thr342 each contribute to the pyridoxal 5'-phosphate site. Residue Lys345 is part of the active site. Lys345 is subject to N6-(pyridoxal phosphate)lysine. The pyridoxal 5'-phosphate site is built by Thr374 and Ser375. Residue Thr460 coordinates substrate.

It belongs to the class-II pyridoxal-phosphate-dependent aminotransferase family. Homodimer. It depends on pyridoxal 5'-phosphate as a cofactor.

The protein resides in the mitochondrion matrix. It carries out the reaction succinyl-CoA + glycine + H(+) = 5-aminolevulinate + CO2 + CoA. The protein operates within porphyrin-containing compound metabolism; protoporphyrin-IX biosynthesis; 5-aminolevulinate from glycine: step 1/1. Catalyzes the synthesis of 5-aminolevulinate (ALA) from succinyl-CoA and glycine, the first and rate-limiting step in heme biosynthesis. The sequence is that of 5-aminolevulinate synthase, mitochondrial (HEM1) from Eremothecium gossypii (strain ATCC 10895 / CBS 109.51 / FGSC 9923 / NRRL Y-1056) (Yeast).